The sequence spans 328 residues: dITP/XTP pyrophosphatase (328 aa).

The unknown stretch occupies residues 1-129; the sequence is MSEKIYEYKD…ATSEQGFGDI (129 aa). Residues 130–324 are NTP pyrophosphatase; it reads ILIATRNEGK…KLMEVFPAWQ (195 aa). 134-139 contacts substrate; the sequence is TRNEGK. The active-site Proton acceptor is Asp196. Asp196 provides a ligand contact to Mg(2+). Residues Ser197, 280–283, Lys303, and 308–309 each bind substrate; these read FGYD and HR.

This sequence belongs to the HAM1 NTPase family. As to quaternary structure, homodimer. Requires Mg(2+) as cofactor.

It catalyses the reaction XTP + H2O = XMP + diphosphate + H(+). The enzyme catalyses dITP + H2O = dIMP + diphosphate + H(+). It carries out the reaction ITP + H2O = IMP + diphosphate + H(+). Its function is as follows. Pyrophosphatase that catalyzes the hydrolysis of nucleoside triphosphates to their monophosphate derivatives, with a high preference for the non-canonical purine nucleotides XTP (xanthosine triphosphate), dITP (deoxyinosine triphosphate) and ITP. Seems to function as a house-cleaning enzyme that removes non-canonical purine nucleotides from the nucleotide pool, thus preventing their incorporation into DNA/RNA and avoiding chromosomal lesions. The polypeptide is dITP/XTP pyrophosphatase (Streptococcus pyogenes serotype M1).